A 323-amino-acid chain; its full sequence is MADVDKLNIDSIIQRLLEVRGSKPGKNVQLQENEIRGLCLKSREIFLSQPILLELEAPLKICGDIHGQYYDLLRLFEYGGFPPESNYLFLGDYVDRGKQSLETICLLLAYKIKYPENFFLLRGNHECASINRIYGFYDECKRRYNIKLWKTFTDCFNCLPIAAIVDEKIFCCHGGLSPDLQSMEQIRRIMRPTDVPDQGLLCDLLWSDPDKDVLGWGENDRGVSFTFGAEVVAKFLHKHDLDLICRAHQVVEDGYEFFAKRQLVTLFSAPNYCGEFDNAGAMMSVDETLMCSFQILKPAEKKKPNASRPVTPPRGMITKQAKK.

Positions 64, 66, 92, and 124 each coordinate Mn(2+). Histidine 125 serves as the catalytic Proton donor. 2 residues coordinate Mn(2+): histidine 173 and histidine 248. The interval 300-323 is disordered; sequence EKKKPNASRPVTPPRGMITKQAKK.

It belongs to the PPP phosphatase family. PP-1 subfamily. In terms of assembly, PP1 comprises a catalytic subunit, ppp1c1, ppp1cb or ppp1cc, which is folded into its native form by inhibitor 2 and glycogen synthetase kinase 3, and then is complexed to one or several targeting or regulatory subunits. Mn(2+) serves as cofactor.

It localises to the cytoplasm. Its subcellular location is the nucleus. The protein localises to the cleavage furrow. It is found in the nucleolus. The protein resides in the nucleoplasm. It localises to the chromosome. Its subcellular location is the centromere. The protein localises to the kinetochore. It is found in the nucleus speckle. The protein resides in the midbody. It localises to the mitochondrion. Its subcellular location is the cytoskeleton. The protein localises to the microtubule organizing center. It carries out the reaction O-phospho-L-seryl-[protein] + H2O = L-seryl-[protein] + phosphate. It catalyses the reaction O-phospho-L-threonyl-[protein] + H2O = L-threonyl-[protein] + phosphate. Functionally, protein phosphatase 1 (PP1) is essential for cell division, and participates in the regulation of glycogen metabolism, muscle contractility and protein synthesis. Promotes nuclear envelope reassembly by targeting nuclear membrane vesicles to chromatin at the end of mitosis. Acts by dephosphorylating membrane proteins such as lamin B receptor (lbr) to regulate the binding of membrane proteins to chromatin. The protein is Serine/threonine-protein phosphatase PP1-gamma catalytic subunit of Xenopus tropicalis (Western clawed frog).